The chain runs to 674 residues: ATP-citrate synthase subunit 1 (674 aa).

Residues 1–10 (MPSATSTNGA) are compositionally biased toward low complexity. The segment at 1-26 (MPSATSTNGANGNGNGNGASASPAPG) is disordered. Residues 261–281 (LLRYQADPACKILVLLGEVGG) and 312–338 (FKTEVQFGHAGAFANSQLETAATKNKS) each bind ATP. Glutamate 278 provides a ligand contact to Mg(2+). The Tele-phosphohistidine intermediate role is filled by histidine 320. 339–349 (MREAGFYVPDT) lines the CoA pocket.

This sequence belongs to the succinate/malate CoA ligase alpha subunit family. As to quaternary structure, composed of two subunits.

It is found in the cytoplasm. The catalysed reaction is oxaloacetate + acetyl-CoA + ADP + phosphate = citrate + ATP + CoA. Functionally, catalyzes the formation of cytosolic acetyl-CoA, which is mainly used for the biosynthesis of fatty acids and sterols. This Sordaria macrospora (strain ATCC MYA-333 / DSM 997 / K(L3346) / K-hell) protein is ATP-citrate synthase subunit 1 (ACL1).